A 352-amino-acid polypeptide reads, in one-letter code: MQHDKNEDIYRLSTYYYDLPPELIAQYPAEYRDSSRLLVLDRKSGDLNDRAFKDISLYLKKGDALVLNETRVIPARFFAYKESGARVEILLLKKLGDDWEALVKPARRLKAGSRVFLSPDKPLVIEIVEELDFAGGRRVRFQDSVDEDTLLQEQGHIPLPPYINRPDEELDRERYQTVYACKSGSVAAPTAGLHFTPDLLKEITLQGINIVRIVLHVGMGTFRPVKNEDIRQHNMHLEYYEVAEDAAALLNLTRESGGQIVAVGTTVVRTLESVYNKDCGFLAGKGETNKYIFPGYQFRAIDKLLTNFHLPGSSLLMLVAGFAGTESTLAAYRHAVENRYRFFSYGDAMLVI.

Belongs to the QueA family. In terms of assembly, monomer.

It is found in the cytoplasm. It carries out the reaction 7-aminomethyl-7-carbaguanosine(34) in tRNA + S-adenosyl-L-methionine = epoxyqueuosine(34) in tRNA + adenine + L-methionine + 2 H(+). Its pathway is tRNA modification; tRNA-queuosine biosynthesis. Functionally, transfers and isomerizes the ribose moiety from AdoMet to the 7-aminomethyl group of 7-deazaguanine (preQ1-tRNA) to give epoxyqueuosine (oQ-tRNA). The sequence is that of S-adenosylmethionine:tRNA ribosyltransferase-isomerase from Syntrophomonas wolfei subsp. wolfei (strain DSM 2245B / Goettingen).